A 349-amino-acid chain; its full sequence is Mitogen-activated protein kinase sty1 (349 aa).

Residues 20 to 299 form the Protein kinase domain; sequence YSDLQPIGMG…AADALAHNYL (280 aa). Residues 26–34 and Lys-49 contribute to the ATP site; that span reads IGMGAFGLV. Catalysis depends on Asp-141, which acts as the Proton acceptor. Position 171 is a phosphothreonine (Thr-171). A TXY motif is present at residues 171-173; the sequence is TGY. The residue at position 173 (Tyr-173) is a Phosphotyrosine. Ser-175 carries the post-translational modification Phosphoserine. The residue at position 176 (Thr-176) is a Phosphothreonine. The TXY signature appears at 176–178; the sequence is TRY.

Belongs to the protein kinase superfamily. Ser/Thr protein kinase family. MAP kinase subfamily. HOG1 sub-subfamily. As to quaternary structure, interacts with cdc37, cmk2, hal4, sin1 and srk1. Requires Mg(2+) as cofactor. Dually phosphorylated on Thr-171 and Tyr-173, which activates the enzyme. Phosphorylated by wis1 in response to osmotic stress, nutrient limitation, hydrogen peroxide and arsenite. Dephosphorylated by pyp1 and pyp2.

It localises to the cytoplasm. It is found in the nucleus. It catalyses the reaction L-seryl-[protein] + ATP = O-phospho-L-seryl-[protein] + ADP + H(+). The catalysed reaction is L-threonyl-[protein] + ATP = O-phospho-L-threonyl-[protein] + ADP + H(+). Activated by the MAPK kinase wisl, and negatively regulated by pypl and pyp2 tyrosine phosphatases. In terms of biological role, proline-directed serine/threonine-protein kinase involved in a signal transduction pathway that is activated by changes in the osmolarity of the extracellular environment. Controls osmotic regulation of transcription of target genes. Involved in osmoregulation and stress response pathways leading to an efficient start of sexual differentiation. Supports translation initiation and facilitates adaptation to environmental stress in part through reducing eIF2-alpha phosphorylation. Links the cell-cycle G2/M control with changes in the extracellular environment that affect cell physiology. Phosphorylates atf1 and mkp1. In conjunction with hal4, has a role in the cellular resistance to toxic cations such as Na(+), Li(+) and Ca(2+). Involved in resistance to arsenite, methylglyoxal and hydrogen peroxide. Involved in induction of thermotolerance in mRNA export, as well as in vacuolar fission. This Schizosaccharomyces pombe (strain 972 / ATCC 24843) (Fission yeast) protein is Mitogen-activated protein kinase sty1 (sty1).